We begin with the raw amino-acid sequence, 142 residues long: Large ribosomal subunit protein mL42 (142 aa).

Residues 1-32 (MAVAAVKWVMSKRTILKHLFPVQNGALYCVCH) constitute a mitochondrion transit peptide.

The protein belongs to the mitochondrion-specific ribosomal protein mL42 family. As to quaternary structure, component of the mitochondrial large ribosomal subunit (mt-LSU). Mature mammalian 55S mitochondrial ribosomes consist of a small (28S) and a large (39S) subunit. The 28S small subunit contains a 12S ribosomal RNA (12S mt-rRNA) and 30 different proteins. The 39S large subunit contains a 16S rRNA (16S mt-rRNA), a copy of mitochondrial valine transfer RNA (mt-tRNA(Val)), which plays an integral structural role, and 52 different proteins.

The protein localises to the mitochondrion. The chain is Large ribosomal subunit protein mL42 (MRPL42) from Homo sapiens (Human).